The chain runs to 104 residues: Ycf49-like protein (104 aa).

The next 3 membrane-spanning stretches (helical) occupy residues 6–26 (IPTW…IALV), 41–61 (LAWG…WHFF), and 73–93 (LQAL…WWIY).

It belongs to the ycf49 family.

Its subcellular location is the cell membrane. The sequence is that of Ycf49-like protein from Synechocystis sp. (strain ATCC 27184 / PCC 6803 / Kazusa).